We begin with the raw amino-acid sequence, 198 residues long: Protein GrpE (198 aa).

Belongs to the GrpE family. In terms of assembly, homodimer.

Its subcellular location is the cytoplasm. In terms of biological role, participates actively in the response to hyperosmotic and heat shock by preventing the aggregation of stress-denatured proteins, in association with DnaK and GrpE. It is the nucleotide exchange factor for DnaK and may function as a thermosensor. Unfolded proteins bind initially to DnaJ; upon interaction with the DnaJ-bound protein, DnaK hydrolyzes its bound ATP, resulting in the formation of a stable complex. GrpE releases ADP from DnaK; ATP binding to DnaK triggers the release of the substrate protein, thus completing the reaction cycle. Several rounds of ATP-dependent interactions between DnaJ, DnaK and GrpE are required for fully efficient folding. The chain is Protein GrpE from Lysinibacillus sphaericus (Bacillus sphaericus).